We begin with the raw amino-acid sequence, 239 residues long: Peroxygenase (239 aa).

G2 is subject to N-acetylglycine. In terms of domain architecture, EF-hand spans 60–95; sequence HNMSVLQQRAAFFDRNNDGIVYPWETYQGFRAVGFG. Ca(2+)-binding residues include D73, N75, D77, and E84. The short motif at 116–125 is the Proline-knot element; it reads PSWIPSPVLS.

Belongs to the caleosin family. In terms of assembly, homodimer. Heme b is required as a cofactor. Requires Ca(2+) as cofactor. In terms of tissue distribution, expressed in pollen (at protein level). Not expressed in leaf, root, stem, tepal, ovary, style, filament or stigma (at protein level).

It localises to the lipid droplet. The protein resides in the microsome membrane. It carries out the reaction RH + ROOH = ROH + ROH.. Its function is as follows. Calcium-binding peroxygenase involved in the degradation of storage lipid in oil bodies. This Lilium longiflorum (Trumpet lily) protein is Peroxygenase.